We begin with the raw amino-acid sequence, 183 residues long: Shikimate kinase (183 aa).

15-20 (GSGKST) lines the ATP pocket. Position 19 (serine 19) interacts with Mg(2+). 3 residues coordinate substrate: aspartate 37, arginine 61, and glycine 85. Arginine 123 contacts ATP. Position 142 (arginine 142) interacts with substrate.

This sequence belongs to the shikimate kinase family. In terms of assembly, monomer. It depends on Mg(2+) as a cofactor.

It localises to the cytoplasm. The enzyme catalyses shikimate + ATP = 3-phosphoshikimate + ADP + H(+). It functions in the pathway metabolic intermediate biosynthesis; chorismate biosynthesis; chorismate from D-erythrose 4-phosphate and phosphoenolpyruvate: step 5/7. Functionally, catalyzes the specific phosphorylation of the 3-hydroxyl group of shikimic acid using ATP as a cosubstrate. The protein is Shikimate kinase of Paracidovorax citrulli (strain AAC00-1) (Acidovorax citrulli).